The following is a 444-amino-acid chain: Multidrug resistance protein MdtA (444 aa).

A signal peptide spans 1-20 (MKSQSKRTSRLFVFVGVVVA). The segment covering 37-52 (NNTSGAQQSARGQDTS) has biased composition (polar residues). Disordered stretches follow at residues 37–60 (NNTS…RNTP) and 399–444 (PRSA…AEKS). Low complexity predominate over residues 409 to 419 (ASAEKAAAEAE). Polar residues predominate over residues 435–444 (ARSTTAAEKS).

It belongs to the membrane fusion protein (MFP) (TC 8.A.1) family. Part of a tripartite efflux system composed of MdtA, MdtB and MdtC.

The protein resides in the cell inner membrane. This Yersinia pseudotuberculosis serotype I (strain IP32953) protein is Multidrug resistance protein MdtA.